We begin with the raw amino-acid sequence, 132 residues long: mRNA interferase toxin YafO (132 aa).

In terms of assembly, probably forms a complex with the antitoxin YafN which inhibits the mRNA interferase activity.

In terms of biological role, toxic component of a type II toxin-antitoxin (TA) system. A translation-dependent mRNA interferase. Overexpression causes cessation of cell growth and inhibits cell proliferation via inhibition of translation; this blockage is overcome by subsequent expression of antitoxin YafN. Overexpression causes cleavage of a number of mRNAs in a ribosome-dependent fashion. YafO binding to the 50S ribosomal subunit in the translation complex induces mRNA cleavage 3' to the region protected by the ribosome; YafO alone is not able to digest mRNA. This chain is mRNA interferase toxin YafO (yafO), found in Escherichia coli (strain K12).